The sequence spans 305 residues: ATP synthase gamma chain (305 aa).

This sequence belongs to the ATPase gamma chain family. As to quaternary structure, F-type ATPases have 2 components, CF(1) - the catalytic core - and CF(0) - the membrane proton channel. CF(1) has five subunits: alpha(3), beta(3), gamma(1), delta(1), epsilon(1). CF(0) has three main subunits: a, b and c.

Its subcellular location is the cell membrane. Produces ATP from ADP in the presence of a proton gradient across the membrane. The gamma chain is believed to be important in regulating ATPase activity and the flow of protons through the CF(0) complex. In Streptomyces avermitilis (strain ATCC 31267 / DSM 46492 / JCM 5070 / NBRC 14893 / NCIMB 12804 / NRRL 8165 / MA-4680), this protein is ATP synthase gamma chain.